The chain runs to 282 residues: MMMGKEDLGLSLSLGFAQNHPLQLNLKPTSSPMSNLQMFPWNQTLVSSSDQQKQQFLRKIDVNSLPTTVDLEEETGVSSPNSTISSTVSGKRRSTEREGTSGGGCGDDLDITLDRSSSRGTSDEEEDYGGETCRKKLRLSKDQSAVLEDTFKEHNTLNPKQKLALAKKLGLTARQVEVWFQNRRARTKLKQTEVDCEYLKRCVEKLTEENRRLEKEAAELRALKLSPRLYGQMSPPTTLLMCPSCERVAGPSSSNHNQRSVSLSPWLQMAHGSTFDVMRPRS.

The segment at 71 to 134 is disordered; sequence LEEETGVSSP…EEDYGGETCR (64 aa). Positions 76 to 89 are enriched in low complexity; the sequence is GVSSPNSTISSTVS. Residues 132–191 constitute a DNA-binding region (homeobox); that stretch reads TCRKKLRLSKDQSAVLEDTFKEHNTLNPKQKLALAKKLGLTARQVEVWFQNRRARTKLKQ. A leucine-zipper region spans residues 199 to 220; sequence LKRCVEKLTEENRRLEKEAAEL.

This sequence belongs to the HD-ZIP homeobox family. Class II subfamily. As to quaternary structure, interacts with BZIP30.

It localises to the nucleus. Probable transcription factor. The protein is Homeobox-leucine zipper protein HAT1 (HAT1) of Arabidopsis thaliana (Mouse-ear cress).